Reading from the N-terminus, the 941-residue chain is UvrABC system protein A (941 aa).

Residue 37–44 participates in ATP binding; that stretch reads GLSGSGKS. A C4-type zinc finger spans residues 260-287; the sequence is CFKCKMSFEELEPLSFSFNSPKGACESC. 2 consecutive ABC transporter domains span residues 316–585 and 605–937; these read IFGY…NNHS and KEKH…KFLA. 637–644 is an ATP binding site; that stretch reads GVSGSGKS. A C4-type zinc finger spans residues 737-763; sequence CEKCQGDGDIKIEMHFLPDVLVQCDSC.

The protein belongs to the ABC transporter superfamily. UvrA family. As to quaternary structure, forms a heterotetramer with UvrB during the search for lesions.

It is found in the cytoplasm. Functionally, the UvrABC repair system catalyzes the recognition and processing of DNA lesions. UvrA is an ATPase and a DNA-binding protein. A damage recognition complex composed of 2 UvrA and 2 UvrB subunits scans DNA for abnormalities. When the presence of a lesion has been verified by UvrB, the UvrA molecules dissociate. The protein is UvrABC system protein A of Helicobacter pylori (strain J99 / ATCC 700824) (Campylobacter pylori J99).